The following is a 148-amino-acid chain: Proline-rich protein 13 (148 aa).

A disordered region spans residues 1 to 148 (MWNPNAGQPG…SSSSSSSDSD (148 aa)). Pro residues-rich tracts occupy residues 27-67 (AHPP…PQPG) and 75-93 (GPYP…PVNP). Residues 109–135 (MQKKMKKAHKKMHKHQKHHKYHKHGKH) are compositionally biased toward basic residues. Residues 136–148 (SSSSSSSSSSDSD) show a composition bias toward low complexity.

It is found in the nucleus. Negatively regulates TSP1 expression at the level of transcription. This down-regulation was shown to reduce taxane-induced apoptosis. The polypeptide is Proline-rich protein 13 (PRR13) (Homo sapiens (Human)).